A 125-amino-acid chain; its full sequence is Large ribosomal subunit protein bL19 (125 aa).

The protein belongs to the bacterial ribosomal protein bL19 family.

Functionally, this protein is located at the 30S-50S ribosomal subunit interface and may play a role in the structure and function of the aminoacyl-tRNA binding site. In Ehrlichia canis (strain Jake), this protein is Large ribosomal subunit protein bL19.